A 362-amino-acid chain; its full sequence is Heme A synthase (362 aa).

Transmembrane regions (helical) follow at residues 10 to 30, 102 to 122, 128 to 148, 159 to 179, and 198 to 218; these read LAAI…MVLV, VIGM…AVSG, LWLI…MVAS, VRLA…VWTL, and AWGL…VAGL. Residue H262 coordinates heme. Helical transmembrane passes span 266 to 286, 297 to 317, and 318 to 338; these read AYTL…AGAG, LAAI…VVPI, and SLAL…VLQA. H323 serves as a coordination point for heme.

It belongs to the COX15/CtaA family. Type 2 subfamily. In terms of assembly, interacts with CtaB. It depends on heme b as a cofactor.

It localises to the cell membrane. It catalyses the reaction Fe(II)-heme o + 2 A + H2O = Fe(II)-heme a + 2 AH2. The protein operates within porphyrin-containing compound metabolism; heme A biosynthesis; heme A from heme O: step 1/1. In terms of biological role, catalyzes the conversion of heme O to heme A by two successive hydroxylations of the methyl group at C8. The first hydroxylation forms heme I, the second hydroxylation results in an unstable dihydroxymethyl group, which spontaneously dehydrates, resulting in the formyl group of heme A. This Bradyrhizobium sp. (strain BTAi1 / ATCC BAA-1182) protein is Heme A synthase.